A 294-amino-acid polypeptide reads, in one-letter code: Probable 2-(5''-triphosphoribosyl)-3'-dephosphocoenzyme-A synthase (294 aa).

Belongs to the CitG/MdcB family.

The catalysed reaction is 3'-dephospho-CoA + ATP = 2'-(5''-triphospho-alpha-D-ribosyl)-3'-dephospho-CoA + adenine. The chain is Probable 2-(5''-triphosphoribosyl)-3'-dephosphocoenzyme-A synthase from Streptococcus pyogenes serotype M28 (strain MGAS6180).